We begin with the raw amino-acid sequence, 303 residues long: Glycine--tRNA ligase alpha subunit (303 aa).

The protein belongs to the class-II aminoacyl-tRNA synthetase family. As to quaternary structure, tetramer of two alpha and two beta subunits.

Its subcellular location is the cytoplasm. It catalyses the reaction tRNA(Gly) + glycine + ATP = glycyl-tRNA(Gly) + AMP + diphosphate. The protein is Glycine--tRNA ligase alpha subunit of Cronobacter sakazakii (strain ATCC BAA-894) (Enterobacter sakazakii).